Here is an 81-residue protein sequence, read N- to C-terminus: Sulfur carrier protein TusA (81 aa).

Cysteine 19 (cysteine persulfide intermediate) is an active-site residue.

Belongs to the sulfur carrier protein TusA family.

Its subcellular location is the cytoplasm. Its function is as follows. Sulfur carrier protein which probably makes part of a sulfur-relay system. The sequence is that of Sulfur carrier protein TusA from Shewanella sp. (strain ANA-3).